The chain runs to 448 residues: Nuclear distribution protein PAC1 (448 aa).

One can recognise a LisH domain in the interval Gln9–Glu41. Positions Ser74–Pro95 are disordered. WD repeat units lie at residues Ser102–Lys143, His145–Arg185, Gly189–Thr236, Gly239–Lys278, Gly283–Leu343, Gly345–Lys384, and Met389–Arg444.

Belongs to the WD repeat LIS1/nudF family. Self-associates. Interacts with NDL1 and dynein.

The protein localises to the cytoplasm. Its subcellular location is the cytoskeleton. The protein resides in the spindle pole. Functionally, positively regulates the activity of the minus-end directed microtubule motor protein dynein. May enhance dynein-mediated microtubule sliding by targeting dynein to the microtubule plus end. Required for nuclear migration during vegetative growth as well as development. Required for retrograde early endosome (EE) transport from the hyphal tip. Required for localization of dynein to the mitotic spindle poles. Recruits additional proteins to the dynein complex at SPBs. The chain is Nuclear distribution protein PAC1 from Fusarium vanettenii (strain ATCC MYA-4622 / CBS 123669 / FGSC 9596 / NRRL 45880 / 77-13-4) (Fusarium solani subsp. pisi).